The sequence spans 155 residues: Ribonuclease H (155 aa).

In terms of domain architecture, RNase H type-1 spans methionine 1–methionine 142. The Mg(2+) site is built by aspartate 10, glutamate 48, aspartate 70, and aspartate 134.

Belongs to the RNase H family. As to quaternary structure, monomer. The cofactor is Mg(2+).

The protein localises to the cytoplasm. The enzyme catalyses Endonucleolytic cleavage to 5'-phosphomonoester.. Endonuclease that specifically degrades the RNA of RNA-DNA hybrids. This is Ribonuclease H from Escherichia coli (strain 55989 / EAEC).